Consider the following 151-residue polypeptide: Large ribosomal subunit protein bL9 (151 aa).

Belongs to the bacterial ribosomal protein bL9 family.

Functionally, binds to the 23S rRNA. This Bordetella avium (strain 197N) protein is Large ribosomal subunit protein bL9.